The primary structure comprises 722 residues: D-(-)-3-hydroxybutyrate oligomer hydrolase (722 aa).

The first 25 residues, 1 to 25 (MKTMQGKGSGRRLRGALLVTMAASG), serve as a signal peptide directing secretion. The active-site Charge relay system is serine 319.

This sequence belongs to the D-(-)-3-hydroxybutyrate oligomer hydrolase family.

The protein resides in the secreted. It catalyses the reaction (3R)-hydroxybutanoate dimer + H2O = 2 (R)-3-hydroxybutanoate + H(+). Its pathway is lipid metabolism; butanoate metabolism. With respect to regulation, inhibited by diisopropylfluorophosphate (DFP). Its function is as follows. Participates in the degradation of poly-3-hydroxybutyrate (PHB). It works downstream of poly(3-hydroxybutyrate) depolymerase, hydrolyzing D(-)-3-hydroxybutyrate oligomers of various length (3HB-oligomers) into 3HB-monomers. The chain is D-(-)-3-hydroxybutyrate oligomer hydrolase from Ralstonia pickettii (Burkholderia pickettii).